Here is a 162-residue protein sequence, read N- to C-terminus: NADPH-dependent 7-cyano-7-deazaguanine reductase (162 aa).

Cys-53 acts as the Thioimide intermediate in catalysis. The Proton donor role is filled by Asp-60. Residues 75–77 (VES) and 94–95 (HE) contribute to the substrate site.

This sequence belongs to the GTP cyclohydrolase I family. QueF type 1 subfamily.

The protein localises to the cytoplasm. The enzyme catalyses 7-aminomethyl-7-carbaguanine + 2 NADP(+) = 7-cyano-7-deazaguanine + 2 NADPH + 3 H(+). It participates in tRNA modification; tRNA-queuosine biosynthesis. Functionally, catalyzes the NADPH-dependent reduction of 7-cyano-7-deazaguanine (preQ0) to 7-aminomethyl-7-deazaguanine (preQ1). This is NADPH-dependent 7-cyano-7-deazaguanine reductase from Exiguobacterium sibiricum (strain DSM 17290 / CCUG 55495 / CIP 109462 / JCM 13490 / 255-15).